We begin with the raw amino-acid sequence, 388 residues long: Glycoprotein-N-acetylgalactosamine 3-beta-galactosyltransferase 1 (388 aa).

At 1–12 (MAPISHYIGKTS) the chain is on the cytoplasmic side. A helical; Signal-anchor for type II membrane protein membrane pass occupies residues 13 to 30 (LTTLAIGIAIGITVSNIV). Residues 31–388 (KFSSTQRRHF…LAQTDSKHIS (358 aa)) lie on the Lumenal side of the membrane. Residues 43–65 (SGYIPDSPHSHGENDFVEGPDDS) form a disordered region. Residue asparagine 80 is glycosylated (N-linked (GlcNAc...) asparagine). The cysteines at positions 95 and 119 are disulfide-linked. 7 residues coordinate UDP: methionine 98, asparagine 100, glutamate 142, glycine 143, arginine 144, lysine 150, and aspartate 173. 2 residues coordinate Mn(2+): aspartate 173 and aspartate 175. Cysteine 238 and cysteine 253 form a disulfide bridge. Tryptophan 292 serves as a coordination point for a glycoprotein. Residues cysteine 307 and cysteine 308 are joined by a disulfide bond. Residues histidine 316 and tyrosine 317 each coordinate UDP. Histidine 316 lines the Mn(2+) pocket. Residues 344 to 388 (STEEQDHGSSHKDTDAMKPEGKGMEDKEDEETNISLAQTDSKHIS) form a disordered region. Residues 347–368 (EQDHGSSHKDTDAMKPEGKGME) show a composition bias toward basic and acidic residues. An N-linked (GlcNAc...) asparagine glycan is attached at asparagine 376.

The protein belongs to the glycosyltransferase 31 family. Beta3-Gal-T subfamily. In terms of assembly, homodimer; disulfide-linked. Mn(2+) is required as a cofactor.

Its subcellular location is the membrane. The enzyme catalyses an N-acetyl-alpha-D-galactosaminyl derivative + UDP-alpha-D-galactose = a beta-D-galactosyl-(1-&gt;3)-N-acetyl-alpha-D-galactosaminyl derivative + UDP + H(+). Its pathway is protein modification; protein glycosylation. Functionally, glycosyltransferase that generates the core 1 O-glycan Gal-beta1-3GalNAc-alpha1-Ser/Thr (T antigen), which is a precursor for many extended O-glycans in glycoproteins. The protein is Glycoprotein-N-acetylgalactosamine 3-beta-galactosyltransferase 1 of Biomphalaria glabrata (Bloodfluke planorb).